We begin with the raw amino-acid sequence, 124 residues long: Large ribosomal subunit protein uL22c (124 aa).

It belongs to the universal ribosomal protein uL22 family. Part of the 50S ribosomal subunit.

The protein resides in the plastid. The protein localises to the chloroplast. In terms of biological role, this protein binds specifically to 23S rRNA. Its function is as follows. The globular domain of the protein is located near the polypeptide exit tunnel on the outside of the subunit, while an extended beta-hairpin is found that lines the wall of the exit tunnel in the center of the 70S ribosome. This is Large ribosomal subunit protein uL22c (rpl22) from Amborella trichopoda.